The sequence spans 293 residues: 1D-myo-inositol 2-acetamido-2-deoxy-alpha-D-glucopyranoside deacetylase (293 aa).

Positions 15, 18, and 148 each coordinate Zn(2+).

It belongs to the MshB deacetylase family. The cofactor is Zn(2+).

It carries out the reaction 1D-myo-inositol 2-acetamido-2-deoxy-alpha-D-glucopyranoside + H2O = 1D-myo-inositol 2-amino-2-deoxy-alpha-D-glucopyranoside + acetate. In terms of biological role, catalyzes the deacetylation of 1D-myo-inositol 2-acetamido-2-deoxy-alpha-D-glucopyranoside (GlcNAc-Ins) in the mycothiol biosynthesis pathway. This Corynebacterium diphtheriae (strain ATCC 700971 / NCTC 13129 / Biotype gravis) protein is 1D-myo-inositol 2-acetamido-2-deoxy-alpha-D-glucopyranoside deacetylase.